The sequence spans 296 residues: Antisense-enhancing sequence 1 (296 aa).

E47 is an active-site residue.

It belongs to the PhzF family.

Functionally, may have isomerase activity. Enhances target gene silencing when coexpressed with antisense RNA. The polypeptide is Antisense-enhancing sequence 1 (aes1) (Schizosaccharomyces pombe (strain 972 / ATCC 24843) (Fission yeast)).